Reading from the N-terminus, the 270-residue chain is Outer membrane protein P.IIC (270 aa).

The signal sequence occupies residues 1–25; sequence MQPAKNLLFSSLLFSSLLFSSAARA. At 26 to 35 the chain is on the extracellular side; the sequence is ASEDGGRGPY. The chain crosses the membrane as a beta stranded span at residues 36–44; it reads VQADLAYAA. Over 45-76 the chain is Periplasmic; sequence ERITHDYPKPTGTGKNKISTVSDYFRNIRTHS. A beta stranded transmembrane segment spans residues 77 to 85; the sequence is VHPRVSVGY. Over 86–89 the chain is Extracellular; the sequence is DFGS. Residues 90-96 form a beta stranded membrane-spanning segment; it reads WRIAADY. Over 97 to 142 the chain is Periplasmic; the sequence is ARYRKWNNNKYSVSIKELLRNDNSASGVRGHLNIQTQKTEHQENGT. A beta stranded transmembrane segment spans residues 143 to 157; that stretch reads FHAVSSLGLSTIYDF. At 158–162 the chain is on the extracellular side; the sequence is DTGSR. Residues 163-173 form a beta stranded membrane-spanning segment; the sequence is FKPYIGMRVAY. Over 174–221 the chain is Periplasmic; it reads GHVRHQVRSVEQETEIITTYPSNGGGKVSLSSKMPPKSAHHQSNSIRR. A disordered region spans residues 194-217; that stretch reads PSNGGGKVSLSSKMPPKSAHHQSN. The chain crosses the membrane as a beta stranded span at residues 222–234; sequence VGLGVIAGVGFDI. Over 235 to 237 the chain is Extracellular; that stretch reads TPN. A beta stranded membrane pass occupies residues 238-246; that stretch reads LTLDTGYRY. The Periplasmic portion of the chain corresponds to 247-261; it reads HNWGRLENTRFKTHE. A beta stranded transmembrane segment spans residues 262–270; the sequence is ASLGMRYRF.

Belongs to the opacity porin family. As to quaternary structure, homotrimer.

The protein localises to the cell outer membrane. Functionally, this protein serves as a porin. The polypeptide is Outer membrane protein P.IIC (piiC) (Neisseria gonorrhoeae).